The sequence spans 317 residues: Protein IMPACT-B (317 aa).

In terms of domain architecture, RWD spans 17–118 (EEIEALSSIY…EKIREFLTEK (102 aa)). A disordered region spans residues 296–317 (DSTEETSKAGGKSKKPKSKKTK). Positions 306–317 (GKSKKPKSKKTK) are enriched in basic residues.

It belongs to the IMPACT family. Interacts with GCN1; prevents the interaction of GCN1 with EIF2AK4/GCN2 and inhibits EIF2AK4/GCN2 kinase activity. Interaction with RPL39; this interaction occurs in a GCN1-independent manner. Associates with ribosomes; this interaction occurs in a GCN1-independent manner. Associates with actin; this interaction occurs in a GCN1-independent manner.

Its subcellular location is the cytoplasm. In terms of biological role, translational regulator that ensures constant high levels of translation upon a variety of stress conditions, such as amino acid starvation, UV-C irradiation, proteasome inhibitor treatment and glucose deprivation. Plays a role as a negative regulator of the EIF2AK4/GCN2 kinase activity; impairs GCN1-mediated EIF2AK4/GCN2 activation, and hence EIF2AK4/GCN2-mediated eIF-2-alpha phosphorylation and subsequent down-regulation of protein synthesis. Plays a role in differentiation of neuronal cells by stimulating neurite outgrowth. The chain is Protein IMPACT-B (impact-B) from Xenopus tropicalis (Western clawed frog).